Consider the following 397-residue polypeptide: Decapping and exoribonuclease protein (397 aa).

Substrate-binding positions include arginine 58, glutamate 101, and 131-133 (WRG). Glutamate 192 contributes to the Mg(2+) binding site. Positions 217 and 234 each coordinate substrate. Residues glutamate 234, aspartate 236, glutamate 253, and leucine 254 each coordinate Mg(2+). Substrate contacts are provided by lysine 255 and glutamine 280. Position 392 is a phosphothreonine (threonine 392). Phosphoserine is present on serine 394.

The protein belongs to the DXO/Dom3Z family. Requires Mg(2+) as cofactor.

It is found in the nucleus. It carries out the reaction a 5'-end triphospho-ribonucleoside in mRNA + H2O = a 5'-end phospho-ribonucleoside in mRNA + diphosphate + H(+). The enzyme catalyses a 5'-end NAD(+)-phospho-ribonucleoside in mRNA + H2O = a 5'-end phospho-ribonucleoside in mRNA + NAD(+) + H(+). It catalyses the reaction a 5'-end NAD(+)-phospho-ribonucleoside in snoRNA + H2O = a 5'-end phospho-ribonucleoside in snoRNA + NAD(+) + H(+). The catalysed reaction is a 5'-end (N(7)-methyl 5'-triphosphoguanosine)-ribonucleoside-ribonucleotide in mRNA + H2O = a (N(7)-methyl 5'-triphosphoguanosine)-nucleoside + a 5'-end phospho-ribonucleoside in mRNA + H(+). It carries out the reaction a 5'-end FAD-phospho-ribonucleoside in mRNA + H2O = a 5'-end phospho-ribonucleoside in mRNA + FAD + H(+). The enzyme catalyses a 5'-end CoA-ribonucleoside in mRNA + H2O = 3'-dephospho-CoA + a 5'-end phospho-ribonucleoside in mRNA + H(+). Decapping enzyme for NAD-capped RNAs: specifically hydrolyzes the nicotinamide adenine dinucleotide (NAD) cap from a subset of RNAs by removing the entire NAD moiety from the 5'-end of an NAD-capped RNA. The NAD-cap is present at the 5'-end of some RNAs and snoRNAs. In contrast to the canonical 5'-end N7 methylguanosine (m7G) cap, the NAD cap promotes mRNA decay. Preferentially acts on NAD-capped transcripts in response to environmental stress. Also acts as a non-canonical decapping enzyme that removes the entire cap structure of m7G capped or incompletely capped RNAs and mediates their subsequent degradation. Specifically degrades pre-mRNAs with a defective 5'-end m7G cap and is part of a pre-mRNA capping quality control. Has decapping activity toward incomplete 5'-end m7G cap mRNAs such as unmethylated 5'-end-capped RNA (cap0), while it has no activity toward 2'-O-ribose methylated m7G cap (cap1). In contrast to canonical decapping enzymes DCP2 and NUDT16, which cleave the cap within the triphosphate linkage, the decapping activity releases the entire cap structure GpppN and a 5'-end monophosphate RNA. Also has 5'-3' exoribonuclease activities: The 5'-end monophosphate RNA is then degraded by the 5'-3' exoribonuclease activity, enabling this enzyme to decap and degrade incompletely capped mRNAs. Also possesses RNA 5'-pyrophosphohydrolase activity by hydrolyzing the 5'-end triphosphate to release pyrophosphates. Exhibits decapping activity towards FAD-capped RNAs. Exhibits decapping activity towards dpCoA-capped RNAs in vitro. This Rattus norvegicus (Rat) protein is Decapping and exoribonuclease protein.